The chain runs to 438 residues: Battenin (438 aa).

The tract at residues 1–27 (MGSSAGSWRRLEDSEREETDSEPQAPR) is disordered. Over 1–37 (MGSSAGSWRRLEDSEREETDSEPQAPRLDSRSVLWKN) the chain is Cytoplasmic. Ser-14 carries the phosphoserine modification. Residues 38–58 (AVGFWILGLCNNFSYVVMLSA) form a helical membrane-spanning segment. Residues 59 to 127 (AHDILKQEQA…GLHLLPYSPR (69 aa)) are Lumenal-facing. Residues 67–87 (QASGNQSHVEPGPTPTPHNSS) form a disordered region. 2 N-linked (GlcNAc...) asparagine glycosylation sites follow: Asn-71 and Asn-85. The chain crosses the membrane as a helical span at residues 128–148 (VLVSGVCSAGSFVLVAFSQSV). At 149 to 151 (GLS) the chain is on the cytoplasmic side. The chain crosses the membrane as a helical span at residues 152 to 172 (LCGVVLASISSGLGEVTFLSL). Residues 173 to 182 (TAFYPSAVIS) lie on the Lumenal side of the membrane. A helical transmembrane segment spans residues 183–203 (WWSSGTGGAGLLGSLSYLGLT). At 204–277 (QAGLSPQHTL…DLSLQERWTV (74 aa)) the chain is on the cytoplasmic side. The disordered stretch occupies residues 239–261 (PGGENEAETAARQPLIGTETPES). The Lysosomal targeting motif signature appears at 242–244 (ENE). The Lysosomal targeting motif. Required for AP1G1, AP2A2 and AP3D1 interaction signature appears at 253-254 (LI). Residues 278 to 298 (FKGLLWYIIPLVLVYFAEYFI) form a helical membrane-spanning segment. Residues 299–346 (NQGLFELLFFRNTSLSHAQQYRWYQMLYQAGVFASRSSLQCCRIRFTW) are Lumenal-facing. N-linked (GlcNAc...) asparagine glycosylation occurs at Asn-310. Residues 347–367 (VLALLQCLNLALLLADVCLNF) traverse the membrane as a helical segment. At 368 to 438 (LPSIYLIFII…PLHDFLCHLP (71 aa)) the chain is on the cytoplasmic side. The Lysosomal targeting motif motif lies at 409–419 (MEAACISDTLG). Cys-435 carries the cysteine methyl ester modification. Cys-435 carries the S-farnesyl cysteine lipid modification. Residues 436–438 (HLP) constitute a propeptide, removed in mature form.

The protein belongs to the battenin family. As to quaternary structure, homooligomer. Interacts with DCTN1, KIF3A, RAB7A and RILP. Interacts with CLN5. Interacts with KCNIP3. Post-translationally, highly glycosylated. In terms of processing, farnesylation is important for trafficking to lysosomes. As to expression, expressed throughout the brain, such as, in the cerebral cortex, hippocampus, cerebellum and several different cerebral nuclei (at protein level). In the cerebral cortex, expressed in all cortical layers. In the hippocampus, expressed in the granule cells in the dentate gyrus and the pyramidal cells of the hippocampus proper. In the cerebellum expressed in the granular and molecular layers, and in the Purkinje cell layer.

It localises to the lysosome membrane. Its subcellular location is the late endosome. The protein localises to the lysosome. It is found in the membrane raft. The protein resides in the golgi apparatus. It localises to the trans-Golgi network. Its subcellular location is the synapse. The protein localises to the synaptosome. It is found in the early endosome membrane. The protein resides in the late endosome membrane. It localises to the cytoplasmic vesicle. Its subcellular location is the autophagosome. Mediates microtubule-dependent, anterograde transport connecting the Golgi network, endosomes, autophagosomes, lysosomes and plasma membrane, and participates in several cellular processes such as regulation of lysosomal pH, lysosome protein degradation, receptor-mediated endocytosis, autophagy, transport of proteins and lipids from the TGN, apoptosis and synaptic transmission. Facilitates the proteins transport from trans-Golgi network (TGN)-to other membrane compartments such as transport of microdomain-associated proteins to the plasma membrane, IGF2R transport to the lysosome where it regulates the CTSD release leading to regulation of CTSD maturation and thereby APP intracellular processing. Moreover regulates CTSD activity in response to osmotic stress. Also binds galactosylceramide and transports it from the trans Golgi to the rafts, which may have immediate and downstream effects on cell survival by modulating ceramide synthesis. At the plasma membrane, regulates actin-dependent events including filopodia formation, cell migration, and pinocytosis through ARF1-CDC42 pathway and also the cytoskeleton organization through interaction with MYH10 and fodrin leading to the regulation of the plasma membrane association of Na+, K+ ATPase complex. Regulates synaptic transmission in the amygdala, hippocampus, and cerebellum through regulation of synaptic vesicles density and their proximity to active zones leading to modulation of short-term plasticity and age-dependent anxious behavior, learning and memory. Regulates autophagic vacuoles (AVs) maturation by modulating the trafficking between endocytic and autophagolysosomal/lysosomal compartments, which involves vesicle fusion leading to regulation of degradation process. Also participates in cellular homeostasis of compounds such as, water, ions, amino acids, proteins and lipids in several tissue namely in brain and kidney through regulation of their transport and synthesis. The polypeptide is Battenin (Mus musculus (Mouse)).